Here is a 312-residue protein sequence, read N- to C-terminus: DNA-directed RNA polymerase subunit alpha (312 aa).

The interval 1–229 is alpha N-terminal domain (alpha-NTD); it reads MLQYQIDRID…ELFQPLATVT (229 aa). The tract at residues 240–312 is alpha C-terminal domain (alpha-CTD); that stretch reads PSPEAQIPLE…ISIPQSRTSV (73 aa).

The protein belongs to the RNA polymerase alpha chain family. In terms of assembly, in cyanobacteria the RNAP catalytic core is composed of 2 alpha, 1 beta, 1 beta', 1 gamma and 1 omega subunit. When a sigma factor is associated with the core the holoenzyme is formed, which can initiate transcription.

The catalysed reaction is RNA(n) + a ribonucleoside 5'-triphosphate = RNA(n+1) + diphosphate. In terms of biological role, DNA-dependent RNA polymerase catalyzes the transcription of DNA into RNA using the four ribonucleoside triphosphates as substrates. This Prochlorococcus marinus (strain AS9601) protein is DNA-directed RNA polymerase subunit alpha.